The primary structure comprises 451 residues: tRNA-2-methylthio-N(6)-dimethylallyladenosine synthase (451 aa).

In terms of domain architecture, MTTase N-terminal spans 3–120; sequence LKLHIKTYGC…LPEMINHVRI (118 aa). 6 residues coordinate [4Fe-4S] cluster: cysteine 12, cysteine 49, cysteine 83, cysteine 157, cysteine 161, and cysteine 164. The 233-residue stretch at 143–375 folds into the Radical SAM core domain; the sequence is QAKGPTAFVS…QECIRKQAMK (233 aa). The region spanning 378 to 441 is the TRAM domain; that stretch reads QAMKGTVQCI…SNSLRGELIS (64 aa).

The protein belongs to the methylthiotransferase family. MiaB subfamily. In terms of assembly, monomer. [4Fe-4S] cluster is required as a cofactor.

The protein resides in the cytoplasm. The enzyme catalyses N(6)-dimethylallyladenosine(37) in tRNA + (sulfur carrier)-SH + AH2 + 2 S-adenosyl-L-methionine = 2-methylsulfanyl-N(6)-dimethylallyladenosine(37) in tRNA + (sulfur carrier)-H + 5'-deoxyadenosine + L-methionine + A + S-adenosyl-L-homocysteine + 2 H(+). Functionally, catalyzes the methylthiolation of N6-(dimethylallyl)adenosine (i(6)A), leading to the formation of 2-methylthio-N6-(dimethylallyl)adenosine (ms(2)i(6)A) at position 37 in tRNAs that read codons beginning with uridine. In Baumannia cicadellinicola subsp. Homalodisca coagulata, this protein is tRNA-2-methylthio-N(6)-dimethylallyladenosine synthase.